We begin with the raw amino-acid sequence, 514 residues long: 2-isopropylmalate synthase (514 aa).

A Pyruvate carboxyltransferase domain is found at 8-270 (IRIFDTTLRD…DCGVVTEQLF (263 aa)). Mn(2+)-binding residues include Asp-17, His-205, His-207, and Asn-241. The interval 394-514 (RLVNLSVQCS…KEEEQEKEGI (121 aa)) is regulatory domain.

It belongs to the alpha-IPM synthase/homocitrate synthase family. LeuA type 1 subfamily. Homodimer. Mn(2+) is required as a cofactor.

It localises to the cytoplasm. The catalysed reaction is 3-methyl-2-oxobutanoate + acetyl-CoA + H2O = (2S)-2-isopropylmalate + CoA + H(+). It functions in the pathway amino-acid biosynthesis; L-leucine biosynthesis; L-leucine from 3-methyl-2-oxobutanoate: step 1/4. Catalyzes the condensation of the acetyl group of acetyl-CoA with 3-methyl-2-oxobutanoate (2-ketoisovalerate) to form 3-carboxy-3-hydroxy-4-methylpentanoate (2-isopropylmalate). This chain is 2-isopropylmalate synthase, found in Nitratidesulfovibrio vulgaris (strain DSM 19637 / Miyazaki F) (Desulfovibrio vulgaris).